An 852-amino-acid chain; its full sequence is Probable LRR receptor-like serine/threonine-protein kinase At1g05700 (852 aa).

The first 25 residues, 1-25 (MEEFRFLYLIYSAAFALCLVVSVLA), serve as a signal peptide directing secretion. The Extracellular portion of the chain corresponds to 26–510 (QDQSGFISID…SCRKSNSKKL (485 aa)). N-linked (GlcNAc...) asparagine glycans are attached at residues Asn138, Asn182, Asn231, Asn240, Asn258, Asn293, Asn400, Asn415, and Asn431. LRR repeat units follow at residues 410-432 (RITS…FSNL), 434-457 (MIQE…SKLK), and 458-479 (FLRV…ELLE). N-linked (GlcNAc...) asparagine glycosylation is present at Asn466. The helical transmembrane segment at 511 to 531 (VIPLVASFAALFILLLLSGVF) threads the bilayer. Residues 532 to 852 (WRIRNRRNKS…LQREESNKNY (321 aa)) lie on the Cytoplasmic side of the membrane. At Thr561 the chain carries Phosphothreonine. Residues 570 to 843 (NNFGQVLGKG…HIVRGLNECL (274 aa)) form the Protein kinase domain. Residues 576 to 584 (LGKGGFGTV) and Lys597 each bind ATP. Tyr642 bears the Phosphotyrosine mark. Asp693 (proton acceptor) is an active-site residue. Phosphoserine occurs at positions 697 and 727. Phosphothreonine is present on residues Thr728 and Thr733.

It belongs to the protein kinase superfamily. Ser/Thr protein kinase family.

It is found in the membrane. It catalyses the reaction L-seryl-[protein] + ATP = O-phospho-L-seryl-[protein] + ADP + H(+). It carries out the reaction L-threonyl-[protein] + ATP = O-phospho-L-threonyl-[protein] + ADP + H(+). This is Probable LRR receptor-like serine/threonine-protein kinase At1g05700 from Arabidopsis thaliana (Mouse-ear cress).